The following is a 155-amino-acid chain: SsrA-binding protein (155 aa).

The protein belongs to the SmpB family.

It is found in the cytoplasm. Required for rescue of stalled ribosomes mediated by trans-translation. Binds to transfer-messenger RNA (tmRNA), required for stable association of tmRNA with ribosomes. tmRNA and SmpB together mimic tRNA shape, replacing the anticodon stem-loop with SmpB. tmRNA is encoded by the ssrA gene; the 2 termini fold to resemble tRNA(Ala) and it encodes a 'tag peptide', a short internal open reading frame. During trans-translation Ala-aminoacylated tmRNA acts like a tRNA, entering the A-site of stalled ribosomes, displacing the stalled mRNA. The ribosome then switches to translate the ORF on the tmRNA; the nascent peptide is terminated with the 'tag peptide' encoded by the tmRNA and targeted for degradation. The ribosome is freed to recommence translation, which seems to be the essential function of trans-translation. The sequence is that of SsrA-binding protein from Bacillus cereus (strain 03BB102).